Reading from the N-terminus, the 292-residue chain is Glycine--tRNA ligase alpha subunit (292 aa).

The protein belongs to the class-II aminoacyl-tRNA synthetase family. As to quaternary structure, tetramer of two alpha and two beta subunits.

The protein localises to the cytoplasm. It carries out the reaction tRNA(Gly) + glycine + ATP = glycyl-tRNA(Gly) + AMP + diphosphate. This chain is Glycine--tRNA ligase alpha subunit, found in Synechococcus sp. (strain ATCC 27144 / PCC 6301 / SAUG 1402/1) (Anacystis nidulans).